The following is a 237-amino-acid chain: Ubiquinone/menaquinone biosynthesis C-methyltransferase UbiE (237 aa).

S-adenosyl-L-methionine is bound by residues threonine 60 and aspartate 80.

This sequence belongs to the class I-like SAM-binding methyltransferase superfamily. MenG/UbiE family.

The enzyme catalyses a 2-demethylmenaquinol + S-adenosyl-L-methionine = a menaquinol + S-adenosyl-L-homocysteine + H(+). It catalyses the reaction a 2-methoxy-6-(all-trans-polyprenyl)benzene-1,4-diol + S-adenosyl-L-methionine = a 5-methoxy-2-methyl-3-(all-trans-polyprenyl)benzene-1,4-diol + S-adenosyl-L-homocysteine + H(+). It participates in quinol/quinone metabolism; menaquinone biosynthesis; menaquinol from 1,4-dihydroxy-2-naphthoate: step 2/2. Its pathway is cofactor biosynthesis; ubiquinone biosynthesis. Its function is as follows. Methyltransferase required for the conversion of demethylmenaquinol (DMKH2) to menaquinol (MKH2) and the conversion of 2-polyprenyl-6-methoxy-1,4-benzoquinol (DDMQH2) to 2-polyprenyl-3-methyl-6-methoxy-1,4-benzoquinol (DMQH2). The polypeptide is Ubiquinone/menaquinone biosynthesis C-methyltransferase UbiE (Syntrophotalea carbinolica (strain DSM 2380 / NBRC 103641 / GraBd1) (Pelobacter carbinolicus)).